The sequence spans 1426 residues: Protein RhsD (1426 aa).

The segment at 256 to 285 is disordered; the sequence is AEEARTSSLSSSDSSRPLSASAFPDTLPGT. Over residues 262 to 277 the composition is skewed to low complexity; sequence SSLSSSDSSRPLSASA. Residues 320-1197 form a 28 X approximate tandem repeats region; it reads YTEAGELLAV…LNEENPHHVY (878 aa). A run of 27 repeats spans residues 334–356, 357–378, 379–421, 422–442, 443–464, 465–485, 486–506, 507–529, 530–550, 551–571, 572–592, 593–613, 614–633, 634–654, 655–675, 676–695, 696–715, 716–738, 739–762, 812–832, 833–861, 862–882, 883–905, 906–941, 942–970, 971–995, and 996–1030. Residues 1073–1085 show a composition bias toward basic and acidic residues; that stretch reads ENGEREKAQRRSL. Residues 1073 to 1097 form a disordered region; sequence ENGEREKAQRRSLAETLQQEGSENG. Residues 1173-1197 form repeat 28; that stretch reads GNTAWSAEYDEWGNQLNEENPHHVY.

This sequence belongs to the RHS family.

Functionally, rhs elements have a nonessential function. They may play an important role in the natural ecology of the cell. In Escherichia coli (strain K12), this protein is Protein RhsD (rhsD).